The sequence spans 201 residues: MDIKACYQNAQALLEGHFLLSSGFHSNYYLQSAKVLEDPKLAEQLALELAKQIQEAHLNIECVCSPAIGGILAGYELARALGVRFIFTERVDNIMTLRRGFEVKKNEKILVCEDIITTGKSAMECAKVLEEKGAHIVAFGALANRGICKRAHSHLKAQEGACLPSHLPLFALEDFVFDMHKPSSCPLCATSVAIKPGSRGN.

113 to 121 (EDIITTGKS) contacts 5-phospho-alpha-D-ribose 1-diphosphate. Residues Thr117 and Arg145 each contribute to the orotate site.

It belongs to the purine/pyrimidine phosphoribosyltransferase family. PyrE subfamily. In terms of assembly, homodimer. Requires Mg(2+) as cofactor.

It catalyses the reaction orotidine 5'-phosphate + diphosphate = orotate + 5-phospho-alpha-D-ribose 1-diphosphate. Its pathway is pyrimidine metabolism; UMP biosynthesis via de novo pathway; UMP from orotate: step 1/2. Functionally, catalyzes the transfer of a ribosyl phosphate group from 5-phosphoribose 1-diphosphate to orotate, leading to the formation of orotidine monophosphate (OMP). The polypeptide is Orotate phosphoribosyltransferase (Helicobacter pylori (strain HPAG1)).